A 165-amino-acid polypeptide reads, in one-letter code: Endoribonuclease YbeY (165 aa).

The Zn(2+) site is built by His-126, His-130, and His-136.

This sequence belongs to the endoribonuclease YbeY family. Zn(2+) serves as cofactor.

It localises to the cytoplasm. In terms of biological role, single strand-specific metallo-endoribonuclease involved in late-stage 70S ribosome quality control and in maturation of the 3' terminus of the 16S rRNA. The sequence is that of Endoribonuclease YbeY from Ruegeria pomeroyi (strain ATCC 700808 / DSM 15171 / DSS-3) (Silicibacter pomeroyi).